The following is a 403-amino-acid chain: High affinity transport system protein p37 (403 aa).

An N-terminal signal peptide occupies residues 1 to 23 (MLKKLKNFILFSSIFSPIAFAIS). Residue Cys-24 is the site of N-palmitoyl cysteine attachment. Cys-24 carries the S-diacylglycerol cysteine lipid modification.

The protein resides in the cell membrane. Its function is as follows. P37 is part of a high-affinity transport system. This is High affinity transport system protein p37 (p37) from Mesomycoplasma hyorhinis (Mycoplasma hyorhinis).